We begin with the raw amino-acid sequence, 462 residues long: MKRDFNEFVKFIKNKKTAVVGMGISNRPLIHFLSKLGAEITAFDRKTKEELGDEVINEFSSENVKFELGENYLSALKGFDVVFKTPSMRIDSEALVKAKQEGAYITSEMEEFIKYCPAKIFGVTGSDGKTTTTTLIYNMLKEEGYKTWVGGNIGTPLFSKIKEVSTKDKVVLELSSFQLMTIDVSPEVAVVTNLSPNHLDIHKNMEEYINAKKNIFTHQSKGNVLIINRDNEITNNMESEALGDLLKFSRNEKVKNGAYYNKQDGNIYLFENKICNKDDIKIKGMDNVKNFMAAFCAVSKDVSKESMIKVAMNFAGVEHRREFVRELDGVKYYNDSIASSPTRTISGLNAYERPVILIAGGYDKHIPFEPLAEKGYDKIKVLILMGATKNKIKETFDKVICEKNIKLPIILSDNLEEAVCEAKKVATNGDIVTLSPACASFDSFPNFEVRGNKFKEIVNNLK.

125 to 131 (GSDGKTT) lines the ATP pocket.

This sequence belongs to the MurCDEF family.

It is found in the cytoplasm. The catalysed reaction is UDP-N-acetyl-alpha-D-muramoyl-L-alanine + D-glutamate + ATP = UDP-N-acetyl-alpha-D-muramoyl-L-alanyl-D-glutamate + ADP + phosphate + H(+). It functions in the pathway cell wall biogenesis; peptidoglycan biosynthesis. In terms of biological role, cell wall formation. Catalyzes the addition of glutamate to the nucleotide precursor UDP-N-acetylmuramoyl-L-alanine (UMA). The protein is UDP-N-acetylmuramoylalanine--D-glutamate ligase of Clostridium acetobutylicum (strain ATCC 824 / DSM 792 / JCM 1419 / IAM 19013 / LMG 5710 / NBRC 13948 / NRRL B-527 / VKM B-1787 / 2291 / W).